The following is a 352-amino-acid chain: MLTERQLMILKEIIRLFTESGQPVGSKKLMSELPMHVSSATIRNDMADLENVGLIEKTHSSSGRVPSMKGYRYYLDHLIQPAVLNPMDVATVQQSFGRHYHKIDEIVSQSANILSNLTSYTAITLGPEMAAIRLTGFRLVPLGNHQVMAIIVTSAGTVDNQVFTIPNAISGDELEKAIRVVNDHLIGLPLTVVSQKLKIEVPALLMQYMGSPGGFLNIFDDVLKQASQERLYVGGQSNLLNFSELTDVSQLKSIYNIINQSDDLAKLLELSPGEANSQVQVRLGNEMTNDLLKNYSLMTVNYDVGEHGQGLIALLGPTSMPYSRMIGLLDLFREELAKKLIDYYADFDDSQS.

It belongs to the HrcA family.

Its function is as follows. Negative regulator of class I heat shock genes (grpE-dnaK-dnaJ and groELS operons). Prevents heat-shock induction of these operons. In Latilactobacillus sakei subsp. sakei (strain 23K) (Lactobacillus sakei subsp. sakei), this protein is Heat-inducible transcription repressor HrcA.